We begin with the raw amino-acid sequence, 409 residues long: Argininosuccinate synthase (409 aa).

ATP is bound by residues 12–20 (AYSGGLDTS) and Ala-39. Residues Tyr-90 and Ser-95 each contribute to the L-citrulline site. Gly-120 provides a ligand contact to ATP. 3 residues coordinate L-aspartate: Thr-122, Asn-126, and Asp-127. Asn-126 is an L-citrulline binding site. L-citrulline is bound by residues Arg-130, Ser-181, Ser-190, Glu-266, and Tyr-278.

The protein belongs to the argininosuccinate synthase family. Type 1 subfamily. In terms of assembly, homotetramer.

It localises to the cytoplasm. The catalysed reaction is L-citrulline + L-aspartate + ATP = 2-(N(omega)-L-arginino)succinate + AMP + diphosphate + H(+). The protein operates within amino-acid biosynthesis; L-arginine biosynthesis; L-arginine from L-ornithine and carbamoyl phosphate: step 2/3. The protein is Argininosuccinate synthase of Gluconacetobacter diazotrophicus (strain ATCC 49037 / DSM 5601 / CCUG 37298 / CIP 103539 / LMG 7603 / PAl5).